Here is a 191-residue protein sequence, read N- to C-terminus: Iron-sulfur flavoprotein (191 aa).

Residues Cys-47, Cys-50, Cys-53, and Cys-59 each coordinate [4Fe-4S] cluster.

This sequence belongs to the SsuE family. Isf subfamily. In terms of assembly, homodimer. It depends on FMN as a cofactor. The cofactor is [4Fe-4S] cluster.

Its function is as follows. Redox-active protein probably involved in electron transport during fermentation of acetate to methane. The protein is Iron-sulfur flavoprotein (isf) of Methanosarcina thermophila.